A 307-amino-acid polypeptide reads, in one-letter code: Ribosomal RNA small subunit methyltransferase H (307 aa).

Residues 34–36 (GGH), Asp-54, Phe-79, Asp-101, and Gln-108 contribute to the S-adenosyl-L-methionine site.

It belongs to the methyltransferase superfamily. RsmH family.

It is found in the cytoplasm. It carries out the reaction cytidine(1402) in 16S rRNA + S-adenosyl-L-methionine = N(4)-methylcytidine(1402) in 16S rRNA + S-adenosyl-L-homocysteine + H(+). In terms of biological role, specifically methylates the N4 position of cytidine in position 1402 (C1402) of 16S rRNA. This Vesicomyosocius okutanii subsp. Calyptogena okutanii (strain HA) protein is Ribosomal RNA small subunit methyltransferase H.